Here is a 125-residue protein sequence, read N- to C-terminus: Bublin coiled-coil protein (125 aa).

The stretch at 46–95 (IRKLDTQLDHLNDYMSKMEERLKAHNDRMMETLKQQKEEREKRRRSFHER) forms a coiled coil. Residues 79–125 (KQQKEEREKRRRSFHERMSQNQSEDEEFKKQMSSILKRVQSVKRTEK) form a disordered region.

In terms of tissue distribution, expressed in many epithelial tissues, including the pharynx, intestine, excretory canal and hypodermis.

The protein localises to the cell junction. Its subcellular location is the cytoplasm. It localises to the cytoskeleton. Its function is as follows. Dynamic component of the endotube in intestinal cells, interacts with intermediate filament and regulates intestinal lumen morphology. The protein is Bublin coiled-coil protein of Caenorhabditis elegans.